A 501-amino-acid chain; its full sequence is Glutamate--tRNA ligase (501 aa).

Residues proline 11 to glycine 21 carry the 'HIGH' region motif. The 'KMSKS' region motif lies at lysine 260 to arginine 264. Lysine 263 lines the ATP pocket.

It belongs to the class-I aminoacyl-tRNA synthetase family. Glutamate--tRNA ligase type 1 subfamily. In terms of assembly, monomer.

Its subcellular location is the cytoplasm. It carries out the reaction tRNA(Glu) + L-glutamate + ATP = L-glutamyl-tRNA(Glu) + AMP + diphosphate. Its function is as follows. Catalyzes the attachment of glutamate to tRNA(Glu) in a two-step reaction: glutamate is first activated by ATP to form Glu-AMP and then transferred to the acceptor end of tRNA(Glu). In Flavobacterium psychrophilum (strain ATCC 49511 / DSM 21280 / CIP 103535 / JIP02/86), this protein is Glutamate--tRNA ligase.